Reading from the N-terminus, the 543-residue chain is Germacrene A synthase (543 aa).

Residues Asp-296, Asp-300, Asp-439, and Glu-447 each coordinate Mg(2+). Positions 296 to 300 (DDTYD) match the DDXXD motif motif.

It belongs to the terpene synthase family. Tpsa subfamily. It depends on Mg(2+) as a cofactor. Requires Mn(2+) as cofactor. As to expression, barely detectable in leaves.

The protein localises to the plastid. The protein resides in the chloroplast. The catalysed reaction is (2E,6E)-farnesyl diphosphate = germacrene A + diphosphate. The enzyme catalyses (2E,6E)-farnesyl diphosphate = (1S,2S,4R)-beta-elemene + diphosphate. It participates in secondary metabolite biosynthesis; terpenoid biosynthesis. Sesquiterpene synthase involved in the biosynthesis of volatile compounds widely used in aromatherapy and folk medicine, and present in culinary herbs. Mediates the conversion of (2E,6E)-farnesyl diphosphate (FPP) into germacrene A and beta-elemene. Not able to use (2E)-geranyl diphosphate (GPP) as substrate. This Lavandula viridis (Green lavender) protein is Germacrene A synthase.